We begin with the raw amino-acid sequence, 160 residues long: Nucleotide-binding protein MADE_1020535 (160 aa).

It belongs to the YajQ family.

In terms of biological role, nucleotide-binding protein. The polypeptide is Nucleotide-binding protein MADE_1020535 (Alteromonas mediterranea (strain DSM 17117 / CIP 110805 / LMG 28347 / Deep ecotype)).